Reading from the N-terminus, the 190-residue chain is Peptidyl-tRNA hydrolase (190 aa).

A tRNA-binding site is contributed by Tyr-18. His-23 functions as the Proton acceptor in the catalytic mechanism. TRNA-binding residues include Tyr-69, Asn-71, and Asn-117.

This sequence belongs to the PTH family. Monomer.

The protein localises to the cytoplasm. The enzyme catalyses an N-acyl-L-alpha-aminoacyl-tRNA + H2O = an N-acyl-L-amino acid + a tRNA + H(+). Hydrolyzes ribosome-free peptidyl-tRNAs (with 1 or more amino acids incorporated), which drop off the ribosome during protein synthesis, or as a result of ribosome stalling. Its function is as follows. Catalyzes the release of premature peptidyl moieties from peptidyl-tRNA molecules trapped in stalled 50S ribosomal subunits, and thus maintains levels of free tRNAs and 50S ribosomes. The polypeptide is Peptidyl-tRNA hydrolase (Rhodococcus erythropolis (strain PR4 / NBRC 100887)).